Here is a 101-residue protein sequence, read N- to C-terminus: NAD(P)H-quinone oxidoreductase subunit 4L, chloroplastic (101 aa).

Helical transmembrane passes span 2 to 22, 32 to 52, and 61 to 81; these read ILEH…YGLI, MCLE…SDFF, and IFSI…LAIV.

This sequence belongs to the complex I subunit 4L family. As to quaternary structure, NDH is composed of at least 16 different subunits, 5 of which are encoded in the nucleus.

It localises to the plastid. The protein resides in the chloroplast thylakoid membrane. It catalyses the reaction a plastoquinone + NADH + (n+1) H(+)(in) = a plastoquinol + NAD(+) + n H(+)(out). The enzyme catalyses a plastoquinone + NADPH + (n+1) H(+)(in) = a plastoquinol + NADP(+) + n H(+)(out). Its function is as follows. NDH shuttles electrons from NAD(P)H:plastoquinone, via FMN and iron-sulfur (Fe-S) centers, to quinones in the photosynthetic chain and possibly in a chloroplast respiratory chain. The immediate electron acceptor for the enzyme in this species is believed to be plastoquinone. Couples the redox reaction to proton translocation, and thus conserves the redox energy in a proton gradient. In Eucalyptus globulus subsp. globulus (Tasmanian blue gum), this protein is NAD(P)H-quinone oxidoreductase subunit 4L, chloroplastic.